The following is an 86-amino-acid chain: Sulmotoxin 2 (86 aa).

The N-terminal stretch at 1-21 is a signal peptide; the sequence is MKTLLLALAVVAFMCLDSVYP. 5 disulfides stabilise this stretch: cysteine 24–cysteine 47, cysteine 27–cysteine 35, cysteine 41–cysteine 62, cysteine 66–cysteine 77, and cysteine 78–cysteine 83.

Belongs to the three-finger toxin family. Ancestral subfamily. Boigatoxin sub-subfamily. As to quaternary structure, monomer. As to expression, expressed by the venom gland.

It is found in the secreted. Its function is as follows. Probable neurotoxin. Is not toxic to mice and geckos. The chain is Sulmotoxin 2 from Spilotes sulphureus (Amazon puffing snake).